Reading from the N-terminus, the 356-residue chain is Glycerol-1-phosphate dehydrogenase [NAD(P)+] (356 aa).

NAD(+) contacts are provided by residues 103–107 (GRSID) and 125–128 (TAAS). Asp-130 contributes to the substrate binding site. Ser-134 provides a ligand contact to NAD(+). Residue Asp-177 participates in substrate binding. Residues Asp-177 and His-257 each contribute to the Zn(2+) site. His-261 provides a ligand contact to substrate. Position 273 (His-273) interacts with Zn(2+).

This sequence belongs to the glycerol-1-phosphate dehydrogenase family. Zn(2+) is required as a cofactor.

The protein localises to the cytoplasm. The enzyme catalyses sn-glycerol 1-phosphate + NAD(+) = dihydroxyacetone phosphate + NADH + H(+). It catalyses the reaction sn-glycerol 1-phosphate + NADP(+) = dihydroxyacetone phosphate + NADPH + H(+). It participates in membrane lipid metabolism; glycerophospholipid metabolism. Functionally, catalyzes the NAD(P)H-dependent reduction of dihydroxyacetonephosphate (DHAP or glycerone phosphate) to glycerol 1-phosphate (G1P). The G1P thus generated is used as the glycerophosphate backbone of phospholipids in the cellular membranes of Archaea. The chain is Glycerol-1-phosphate dehydrogenase [NAD(P)+] from Methanosarcina mazei (strain ATCC BAA-159 / DSM 3647 / Goe1 / Go1 / JCM 11833 / OCM 88) (Methanosarcina frisia).